Here is a 107-residue protein sequence, read N- to C-terminus: Protein RnfH (107 aa).

The tract at residues 82 to 107 is disordered; it reads ARRKRAEKAKEEGRANKVTGGRPIER.

It belongs to the UPF0125 (RnfH) family.

The protein is Protein RnfH of Pseudoalteromonas translucida (strain TAC 125).